Reading from the N-terminus, the 339-residue chain is Silicatein (339 aa).

A signal peptide spans 1 to 18 (MAIVYGAILFQIILIACA). Residues 19–122 (EFPPEWHAWK…REYQAPATVS (104 aa)) constitute a propeptide that is removed on maturation. Position 123 is a n,N-dimethylleucine; alternate (Leu123). An N-methylleucine; alternate modification is found at Leu123. Ser188 is subject to Phosphoserine. Tyr219 carries the phosphotyrosine modification. Active-site residues include His286 and Asn306. Ser335 is modified (phosphoserine).

This sequence belongs to the peptidase C1 family. In terms of assembly, homodimer. Homodimerization occurs as a result of non-covalent interactions and not through disulfide linkages between the two monomers.

In terms of biological role, polymerizes silica around the axial filament during spicule formation. The protein is Silicatein of Petrosia ficiformis (Common Mediterranean sponge).